Consider the following 223-residue polypeptide: Triosephosphate isomerase (223 aa).

Position 6-8 (6-8 (NLK)) interacts with substrate. The active-site Electrophile is histidine 86. Glutamate 151 functions as the Proton acceptor in the catalytic mechanism. Glycine 157 and serine 187 together coordinate substrate.

It belongs to the triosephosphate isomerase family. In terms of assembly, homodimer.

It is found in the cytoplasm. It carries out the reaction D-glyceraldehyde 3-phosphate = dihydroxyacetone phosphate. It functions in the pathway carbohydrate biosynthesis; gluconeogenesis. The protein operates within carbohydrate degradation; glycolysis; D-glyceraldehyde 3-phosphate from glycerone phosphate: step 1/1. Involved in the gluconeogenesis. Catalyzes stereospecifically the conversion of dihydroxyacetone phosphate (DHAP) to D-glyceraldehyde-3-phosphate (G3P). In Campylobacter jejuni subsp. jejuni serotype O:2 (strain ATCC 700819 / NCTC 11168), this protein is Triosephosphate isomerase.